Reading from the N-terminus, the 519-residue chain is Methionine--tRNA ligase (519 aa).

The 'HIGH' region signature appears at 11-21 (AYPNAAPHVGH). The 'KMSKS' region signature appears at 299-303 (KMSKS). K302 is a binding site for ATP. Residues 500 to 519 (LPPPTGVFPRYQPPQPPEGK) form a disordered region.

The protein belongs to the class-I aminoacyl-tRNA synthetase family. MetG type 2B subfamily. Monomer.

The protein resides in the cytoplasm. It carries out the reaction tRNA(Met) + L-methionine + ATP = L-methionyl-tRNA(Met) + AMP + diphosphate. Is required not only for elongation of protein synthesis but also for the initiation of all mRNA translation through initiator tRNA(fMet) aminoacylation. The sequence is that of Methionine--tRNA ligase (metG) from Mycobacterium tuberculosis (strain CDC 1551 / Oshkosh).